Consider the following 508-residue polypeptide: Maturase K (508 aa).

The protein belongs to the intron maturase 2 family. MatK subfamily.

It is found in the plastid. The protein resides in the chloroplast. Usually encoded in the trnK tRNA gene intron. Probably assists in splicing its own and other chloroplast group II introns. The polypeptide is Maturase K (Cunninghamia lanceolata (China fir)).